Here is a 363-residue protein sequence, read N- to C-terminus: UDP-N-acetylglucosamine--N-acetylmuramyl-(pentapeptide) pyrophosphoryl-undecaprenol N-acetylglucosamine transferase (363 aa).

Residues 14 to 16 (TGG), Asn-122, Arg-163, Ser-190, and Gln-285 contribute to the UDP-N-acetyl-alpha-D-glucosamine site.

The protein belongs to the glycosyltransferase 28 family. MurG subfamily.

It localises to the cell inner membrane. It carries out the reaction di-trans,octa-cis-undecaprenyl diphospho-N-acetyl-alpha-D-muramoyl-L-alanyl-D-glutamyl-meso-2,6-diaminopimeloyl-D-alanyl-D-alanine + UDP-N-acetyl-alpha-D-glucosamine = di-trans,octa-cis-undecaprenyl diphospho-[N-acetyl-alpha-D-glucosaminyl-(1-&gt;4)]-N-acetyl-alpha-D-muramoyl-L-alanyl-D-glutamyl-meso-2,6-diaminopimeloyl-D-alanyl-D-alanine + UDP + H(+). Its pathway is cell wall biogenesis; peptidoglycan biosynthesis. Cell wall formation. Catalyzes the transfer of a GlcNAc subunit on undecaprenyl-pyrophosphoryl-MurNAc-pentapeptide (lipid intermediate I) to form undecaprenyl-pyrophosphoryl-MurNAc-(pentapeptide)GlcNAc (lipid intermediate II). The protein is UDP-N-acetylglucosamine--N-acetylmuramyl-(pentapeptide) pyrophosphoryl-undecaprenol N-acetylglucosamine transferase of Prochlorococcus marinus (strain AS9601).